The sequence spans 354 residues: Methionine import ATP-binding protein MetN (354 aa).

In terms of domain architecture, ABC transporter spans 8–250; it reads LDHIDITFHQ…PREDLTKDFI (243 aa). 42–49 is a binding site for ATP; the sequence is GYSGAGKS.

The protein belongs to the ABC transporter superfamily. Methionine importer (TC 3.A.1.24) family. In terms of assembly, the complex is composed of two ATP-binding proteins (MetN), two transmembrane proteins (MetI) and a solute-binding protein (MetQ).

It localises to the cell membrane. It carries out the reaction L-methionine(out) + ATP + H2O = L-methionine(in) + ADP + phosphate + H(+). The enzyme catalyses D-methionine(out) + ATP + H2O = D-methionine(in) + ADP + phosphate + H(+). Functionally, part of the ABC transporter complex MetNIQ involved in methionine import. Responsible for energy coupling to the transport system. This Streptococcus mutans serotype c (strain ATCC 700610 / UA159) protein is Methionine import ATP-binding protein MetN.